A 627-amino-acid polypeptide reads, in one-letter code: uncharacterized protein (627 aa).

Disordered regions lie at residues 141–187 (LRYP…TPPS) and 490–510 (ENENTNGSANNSTYTNGGPRT). The span at 491 to 510 (NENTNGSANNSTYTNGGPRT) shows a compositional bias: polar residues. Residue Ser-559 is modified to Phosphoserine.

This is an uncharacterized protein from Saccharomyces cerevisiae (strain ATCC 204508 / S288c) (Baker's yeast).